The primary structure comprises 325 residues: Delta(1)-pyrroline-2-carboxylate reductase (325 aa).

Belongs to the ornithine cyclodeaminase/mu-crystallin family.

It catalyses the reaction L-proline + NAD(+) = 1-pyrroline-2-carboxylate + NADH + H(+). The enzyme catalyses L-proline + NADP(+) = 1-pyrroline-2-carboxylate + NADPH + H(+). Catalyzes the reduction of Delta(1)-pyrroline-2-carboxylate (Pyr2C) to L-proline, using preferentially NADPH over NADH as the electron donor. Is likely involved in a degradation pathway that converts trans-3-hydroxy-L-proline (t3LHyp) to L-proline, which allows B.cereus to grow on t3LHyp as a sole carbon source. The polypeptide is Delta(1)-pyrroline-2-carboxylate reductase (Bacillus cereus (strain ATCC 14579 / DSM 31 / CCUG 7414 / JCM 2152 / NBRC 15305 / NCIMB 9373 / NCTC 2599 / NRRL B-3711)).